A 428-amino-acid polypeptide reads, in one-letter code: Flap endonuclease 1-B (428 aa).

Residues 1–132 are N-domain; it reads MGIKGLTKVL…KELAKRSLKR (132 aa). Aspartate 34 provides a ligand contact to Mg(2+). Arginine 98 lines the DNA pocket. Positions 114, 186, 188, 207, and 209 each coordinate Mg(2+). The segment at 150-281 is I-domain; it reads AVEKFSKRTV…QRALKLIRQH (132 aa). A DNA-binding site is contributed by glutamate 186. Positions 259 and 261 each coordinate DNA. Aspartate 261 provides a ligand contact to Mg(2+).

The protein belongs to the XPG/RAD2 endonuclease family. FEN1 subfamily. As to quaternary structure, interacts with PCNA. Three molecules of FEN1 bind to one PCNA trimer with each molecule binding to one PCNA monomer. PCNA stimulates the nuclease activity without altering cleavage specificity. It depends on Mg(2+) as a cofactor. Post-translationally, phosphorylated. Phosphorylation upon DNA damage induces relocalization to the nuclear plasma.

The protein resides in the nucleus. It localises to the nucleolus. It is found in the nucleoplasm. Its subcellular location is the mitochondrion. Its function is as follows. Structure-specific nuclease with 5'-flap endonuclease and 5'-3' exonuclease activities involved in DNA replication and repair. During DNA replication, cleaves the 5'-overhanging flap structure that is generated by displacement synthesis when DNA polymerase encounters the 5'-end of a downstream Okazaki fragment. It enters the flap from the 5'-end and then tracks to cleave the flap base, leaving a nick for ligation. Also involved in the long patch base excision repair (LP-BER) pathway, by cleaving within the apurinic/apyrimidinic (AP) site-terminated flap. Acts as a genome stabilization factor that prevents flaps from equilibrating into structures that lead to duplications and deletions. Also possesses 5'-3' exonuclease activity on nicked or gapped double-stranded DNA, and exhibits RNase H activity. Also involved in replication and repair of rDNA and in repairing mitochondrial DNA. The chain is Flap endonuclease 1-B from Sorghum bicolor (Sorghum).